Consider the following 351-residue polypeptide: Rhodopsin (351 aa).

Topologically, residues 1–36 (MNGTEGPYFYVPMVNTTGVVRSPYEYPQYYLVNPAA) are extracellular. 2 N-linked (GlcNAc...) asparagine glycosylation sites follow: Asn-2 and Asn-15. The helical transmembrane segment at 37-61 (FAVLGAYMFFLIIFGFPINFLTLYV) threads the bilayer. The Cytoplasmic portion of the chain corresponds to 62–73 (TLEHKKLRTPLN). The helical transmembrane segment at 74 to 96 (YILLNLAVADLFMVIGGFTTTMY) threads the bilayer. Topologically, residues 97–110 (SSMHGYFVLGRLGC) are extracellular. Cys-110 and Cys-187 are joined by a disulfide. A helical membrane pass occupies residues 111 to 133 (NLEGFSATLGGMISLWSLAVLAI). Positions 134-136 (ERW) match the 'Ionic lock' involved in activated form stabilization motif. Topologically, residues 134–152 (ERWVVVCKPTSNFRFGENH) are cytoplasmic. Residues 153-173 (AIMGVSLTWTMALACTVPPLV) traverse the membrane as a helical segment. Topologically, residues 174-202 (GWSRYIPEGMQCSCGIDYYTRAEGFNNES) are extracellular. N-linked (GlcNAc...) asparagine glycosylation occurs at Asn-200. A helical transmembrane segment spans residues 203–224 (FVLYMFFCHFMVPLIIIFFCYG). The Cytoplasmic segment spans residues 225-252 (RLLCAVKEAAAAQQESETTQRAEREVTR). Residues 253 to 274 (MVILMVIGYLVCWLPYASVAWF) form a helical membrane-spanning segment. The Extracellular portion of the chain corresponds to 275–286 (IFTHQGSEFGPL). The helical transmembrane segment at 287–308 (FMTIPAFFAKSSSIYNPVIYIC) threads the bilayer. N6-(retinylidene)lysine is present on Lys-296. Topologically, residues 309 to 351 (MNKQFRNCMITTLFCGKNPFEGEEEGASSTKTEASSASSVSPA) are cytoplasmic. Cys-323 is lipidated: S-palmitoyl cysteine. Residues 330 to 351 (GEEEGASSTKTEASSASSVSPA) form a disordered region. Residues 335–351 (ASSTKTEASSASSVSPA) show a composition bias toward low complexity.

It belongs to the G-protein coupled receptor 1 family. Opsin subfamily. Phosphorylated on some or all of the serine and threonine residues present in the C-terminal region. Post-translationally, contains one covalently linked retinal chromophore.

It is found in the membrane. The protein resides in the cell projection. Its subcellular location is the cilium. It localises to the photoreceptor outer segment. Photoreceptor required for image-forming vision at low light intensity. While most salt water fish species use retinal as chromophore, most freshwater fish use 3-dehydroretinal, or a mixture of retinal and 3-dehydroretinal. Light-induced isomerization of 11-cis to all-trans retinal triggers a conformational change that activates signaling via G-proteins. Subsequent receptor phosphorylation mediates displacement of the bound G-protein alpha subunit by arrestin and terminates signaling. This Neoniphon sammara (Spotfin squirrelfish) protein is Rhodopsin (rho).